A 459-amino-acid polypeptide reads, in one-letter code: MALPLVAVVGRPNVGKSSLVNRLAGVRSAIVHDEPGITRDRLYQEVEWNGRRLRVVDTGGLVFGDDSEFLPHIRQQAMAAMAEAHAVIFVVDGREGLTPADKELADWLRRQPLPVVVAVNKCESGQLGLAQAAAFWELGLGEPIPCSAVHGNGVAELLEAVLPHLPEVAQEAADEPDPIAVAIVGRPNVGKSSLLNRLVGSERAIVSPIAGTTRDAVDTLVEWEGQSYRLIDTAGIRRKSRVEYGVEFFSINRAFKAIQRSDVVLLVIDALEGVTEQDQRLAGRIEEEGRACIIVVNKWDAVENKDTHTINEYTREIRERLYFIDWAPLLFVSALTGQRTHKIFAEVNTAVAAHRKRIATSVVNEVLQDALAWQSPPANRQGKQGKIYYGTQVAERPPTFLLFVNDPDLFKENYRRYLEKHFRQNLDFTGTPIRFRWRSKSERLVGRAVQKLEGSLASR.

2 consecutive EngA-type G domains span residues 4 to 169 (PLVA…PEVA) and 179 to 355 (IAVA…AAHR). GTP-binding positions include 10-17 (GRPNVGKS), 57-61 (DTGGL), 120-123 (NKCE), 185-192 (GRPNVGKS), 232-236 (DTAGI), and 297-300 (NKWD). A KH-like domain is found at 356 to 441 (KRIATSVVNE…PIRFRWRSKS (86 aa)).

This sequence belongs to the TRAFAC class TrmE-Era-EngA-EngB-Septin-like GTPase superfamily. EngA (Der) GTPase family. Associates with the 50S ribosomal subunit.

Functionally, GTPase that plays an essential role in the late steps of ribosome biogenesis. This chain is GTPase Der, found in Synechococcus sp. (strain JA-3-3Ab) (Cyanobacteria bacterium Yellowstone A-Prime).